The chain runs to 473 residues: Cysteine--tRNA ligase (473 aa).

C30 lines the Zn(2+) pocket. A 'HIGH' region motif is present at residues 32–42 (MTVYDYCHIGH). 3 residues coordinate Zn(2+): C213, H238, and E242. The short motif at 270–274 (KMSKS) is the 'KMSKS' region element. An ATP-binding site is contributed by K273.

The protein belongs to the class-I aminoacyl-tRNA synthetase family. As to quaternary structure, monomer. The cofactor is Zn(2+).

It localises to the cytoplasm. The catalysed reaction is tRNA(Cys) + L-cysteine + ATP = L-cysteinyl-tRNA(Cys) + AMP + diphosphate. The protein is Cysteine--tRNA ligase of Acinetobacter baumannii (strain AB307-0294).